We begin with the raw amino-acid sequence, 391 residues long: MTSPTRRRTAKRRRRKLNKRGKLLFGLLAVMVCITIWNALHRNSEENEPSQETAAVSNTDQKKEVKKKTAKKSEEQIKTVDRNQKISNYLKEIGFSGTAMIVRNGEIVTNKGFGYADRKHYIQNNPLTSFYVGSSQKALIATAILQLEEKGKLQTSDPVSTYLPHFPNGQTITLKNLLTHTSGINGHIEGNGAITPDDLIKDIELQGIKRQPGVWDYKDSNYSVLAYIIAEVSGEPYEQYIKNHIFKPAGMTHAGFYKTYEKEPYPAVGYKMEGSKTVTPYIPDLSQLYGAGDIYMSAIDMYKFDQALIDGKLYSQKSYEKMFTPGSSSTYGMGFYVAPGSYSNHGVMPGFNILNSFSKSGQTIVILFSNIQNNAKLGQVNNKIYQLLNQE.

The chain crosses the membrane as a helical span at residues 21–40; it reads GKLLFGLLAVMVCITIWNAL. Residues 44–76 form a disordered region; the sequence is SEENEPSQETAAVSNTDQKKEVKKKTAKKSEEQ. Polar residues predominate over residues 50–59; it reads SQETAAVSNT.

The protein belongs to the beta-lactamase family.

It localises to the cell membrane. The sequence is that of Putative penicillin-binding protein PbpX (pbpX) from Bacillus subtilis (strain 168).